The primary structure comprises 63 residues: Large ribosomal subunit protein bL35 (63 aa).

Over residues 1 to 43 the composition is skewed to basic residues; it reads MKMRTHSGAKKRLKVLSSGKVKKKSTRMRHLNSHMSSKTKRQL. The interval 1-45 is disordered; sequence MKMRTHSGAKKRLKVLSSGKVKKKSTRMRHLNSHMSSKTKRQLGK.

This sequence belongs to the bacterial ribosomal protein bL35 family.

The polypeptide is Large ribosomal subunit protein bL35 (Bdellovibrio bacteriovorus (strain ATCC 15356 / DSM 50701 / NCIMB 9529 / HD100)).